A 370-amino-acid chain; its full sequence is Prolactin-releasing peptide receptor (370 aa).

The interval Met1–Glu34 is disordered. Residues Met1–Leu62 lie on the Extracellular side of the membrane. The segment covering Ala21–Glu34 has biased composition (polar residues). N-linked (GlcNAc...) asparagine glycans are attached at residues Asn27 and Asn36. The helical transmembrane segment at Ile63 to Leu83 threads the bilayer. The Cytoplasmic portion of the chain corresponds to Val84–Asn101. Residues Leu102–Phe122 form a helical membrane-spanning segment. Residues Glu123 to Gly126 are Extracellular-facing. The helical transmembrane segment at Trp127–Val147 threads the bilayer. A disulfide bond links Cys134 and Cys211. The Cytoplasmic segment spans residues Ser148–Leu175. The helical transmembrane segment at Ser176–Val196 threads the bilayer. Residues His197 to Gln223 are Extracellular-facing. The helical transmembrane segment at Ile224–Ser244 threads the bilayer. The Cytoplasmic segment spans residues Tyr245–Thr276. The chain crosses the membrane as a helical span at residues Phe277 to Phe297. The Extracellular segment spans residues Asn298–Gln317. A helical membrane pass occupies residues Leu318 to Leu338. At His339–Ile370 the chain is on the cytoplasmic side. The required for interaction with GRIP1, GRIP2 and PICK1 stretch occupies residues Thr365–Ile370.

Belongs to the G-protein coupled receptor 1 family. As to quaternary structure, interacts through its C-terminal region with the PDZ domain-containing proteins GRIP1, GRIP2 and PICK1. Interacts with PDZ domains 4 and 5 of GRIP1 and with the PDZ domain of PICK1. As to expression, widely expressed, with highest levels in pituitary, cerebellum, and hypothalamus.

Its subcellular location is the cell membrane. Receptor for prolactin-releasing peptide (PrRP). Implicated in lactation, regulation of food intake and pain-signal processing. This is Prolactin-releasing peptide receptor (Prlhr) from Rattus norvegicus (Rat).